Consider the following 385-residue polypeptide: Trans-enoyl reductase tasC (385 aa).

49–52 (VDTK) lines the NADP(+) pocket. 136-143 (NSWYTVAW) serves as a coordination point for substrate. NADP(+) contacts are provided by residues 196–199 (SSST), 219–222 (SARN), and 284–285 (LD). A substrate-binding site is contributed by 305–309 (GPELM). Residue 374–375 (VS) participates in NADP(+) binding.

It belongs to the zinc-containing alcohol dehydrogenase family. As to quaternary structure, monomer.

The enzyme catalyses (2S,4S)-4-hydroxy-4-methylglutamate + 8 malonyl-CoA + 3 S-adenosyl-L-methionine + ATP + 8 NADPH + 11 H(+) = (2S)-3-[(2S)-3,5-dioxo-4-[(2E,4R,6R,8E,10E,12E)-4,6,12-trimethyltetradeca-2,8,10,12-tetraenoyl]pyrrolidin-2-yl]-2-hydroxy-2-methylpropanoate + AMP + 3 S-adenosyl-L-homocysteine + 8 CO2 + diphosphate + 8 NADP(+) + 8 CoA + 6 H2O. The catalysed reaction is (2S,4R)-4-hydroxy-4-methylglutamate + 8 malonyl-CoA + 3 S-adenosyl-L-methionine + ATP + 8 NADPH + 11 H(+) = (2R)-3-[(2S)-3,5-dioxo-4-[(2E,4R,6R,8E,10E,12E)-4,6,12-trimethyltetradeca-2,8,10,12-tetraenoyl]pyrrolidin-2-yl]-2-hydroxy-2-methylpropanoate + AMP + 3 S-adenosyl-L-homocysteine + 8 CO2 + diphosphate + 8 NADP(+) + 8 CoA + 6 H2O. It functions in the pathway secondary metabolite biosynthesis. Functionally, trans-enoyl reductase; part of the gene cluster that mediates the biosynthesis of the tetramic acids Sch210971 and Sch210972, potential anti-HIV fungal natural product that contain a decalin core. The PKS module of tasS together with the enoylreductase tasC catalyze the formation of the polyketide unit which is then conjugated to 4-hydroxyl-4-methyl glutamate (HMG) by the condensation domain of the tasS NRPS module. One unique structural feature of Sch210971 and Sch210972 is the tetramic acid motif proposed to be derived from the non-proteinogenic amino acid HMG, by a Dieckmann-type condensation catalyzed by the reductase domain of tasS. The aldolase tasA catalyzes the aldol condensation of 2 molecules of pyruvic acid to yield the intermediate 4-hydroxyl-4-methyl-2-oxoglutarate (HMOG), which can then be stereoselectively transaminated, may be by tasG, to form HMG. The Diels-Alderase tas3 then uses the Dieckmann product of tasS as substrate and catalyzes the Diels-Alder cycloaddition to form the decalin ring of Sch210971 and Sch210972. The polypeptide is Trans-enoyl reductase tasC (Hapsidospora irregularis).